We begin with the raw amino-acid sequence, 607 residues long: Elongation factor 4 (607 aa).

Residues 11–193 (SKIRNFSIIA…QIVEKVPAPT (183 aa)) form the tr-type G domain. GTP-binding positions include 23–28 (DHGKST) and 140–143 (NKID).

This sequence belongs to the TRAFAC class translation factor GTPase superfamily. Classic translation factor GTPase family. LepA subfamily.

The protein resides in the cell membrane. The enzyme catalyses GTP + H2O = GDP + phosphate + H(+). Its function is as follows. Required for accurate and efficient protein synthesis under certain stress conditions. May act as a fidelity factor of the translation reaction, by catalyzing a one-codon backward translocation of tRNAs on improperly translocated ribosomes. Back-translocation proceeds from a post-translocation (POST) complex to a pre-translocation (PRE) complex, thus giving elongation factor G a second chance to translocate the tRNAs correctly. Binds to ribosomes in a GTP-dependent manner. In Bacillus cereus (strain ZK / E33L), this protein is Elongation factor 4.